The primary structure comprises 564 residues: Type 2 DNA topoisomerase 6 subunit B (564 aa).

ATP contacts are provided by residues N46, D78, 99–100 (TK), 109–116 (GQQGIGIS), and K471.

It belongs to the TOP6B family. Homodimer. Heterotetramer of two Top6A and two Top6B chains.

The catalysed reaction is ATP-dependent breakage, passage and rejoining of double-stranded DNA.. Its function is as follows. Relaxes both positive and negative superturns and exhibits a strong decatenase activity. The protein is Type 2 DNA topoisomerase 6 subunit B of Pyrococcus horikoshii (strain ATCC 700860 / DSM 12428 / JCM 9974 / NBRC 100139 / OT-3).